Reading from the N-terminus, the 211-residue chain is Probable GTP-binding protein EngB (211 aa).

The EngB-type G domain maps to 21–197; the sequence is TAPEFAFLGR…WGEIHRVAAE (177 aa). Residues 29 to 36, 55 to 59, 80 to 83, 147 to 150, and 176 to 178 contribute to the GTP site; these read GRSNVGKS, GRTRA, DLPG, TKAD, and CSA. Residues Ser-36 and Thr-57 each coordinate Mg(2+).

Belongs to the TRAFAC class TrmE-Era-EngA-EngB-Septin-like GTPase superfamily. EngB GTPase family. Mg(2+) serves as cofactor.

Its function is as follows. Necessary for normal cell division and for the maintenance of normal septation. The chain is Probable GTP-binding protein EngB from Acidobacterium capsulatum (strain ATCC 51196 / DSM 11244 / BCRC 80197 / JCM 7670 / NBRC 15755 / NCIMB 13165 / 161).